A 365-amino-acid chain; its full sequence is UDP-N-acetylglucosamine--N-acetylmuramyl-(pentapeptide) pyrophosphoryl-undecaprenol N-acetylglucosamine transferase (365 aa).

UDP-N-acetyl-alpha-D-glucosamine is bound by residues 20–22, Asn132, Arg168, Ser196, Ile253, and Gln298; that span reads TGG.

The protein belongs to the glycosyltransferase 28 family. MurG subfamily.

Its subcellular location is the cell inner membrane. It catalyses the reaction di-trans,octa-cis-undecaprenyl diphospho-N-acetyl-alpha-D-muramoyl-L-alanyl-D-glutamyl-meso-2,6-diaminopimeloyl-D-alanyl-D-alanine + UDP-N-acetyl-alpha-D-glucosamine = di-trans,octa-cis-undecaprenyl diphospho-[N-acetyl-alpha-D-glucosaminyl-(1-&gt;4)]-N-acetyl-alpha-D-muramoyl-L-alanyl-D-glutamyl-meso-2,6-diaminopimeloyl-D-alanyl-D-alanine + UDP + H(+). It functions in the pathway cell wall biogenesis; peptidoglycan biosynthesis. Functionally, cell wall formation. Catalyzes the transfer of a GlcNAc subunit on undecaprenyl-pyrophosphoryl-MurNAc-pentapeptide (lipid intermediate I) to form undecaprenyl-pyrophosphoryl-MurNAc-(pentapeptide)GlcNAc (lipid intermediate II). The polypeptide is UDP-N-acetylglucosamine--N-acetylmuramyl-(pentapeptide) pyrophosphoryl-undecaprenol N-acetylglucosamine transferase (Ralstonia nicotianae (strain ATCC BAA-1114 / GMI1000) (Ralstonia solanacearum)).